A 493-amino-acid chain; its full sequence is Cholesteryl ester transfer protein (493 aa).

Residues 1 to 17 form the signal peptide; sequence MLAATVLTLALLGNVHA. N-linked (GlcNAc...) asparagine glycans are attached at residues N59 and N105. A disulfide bridge links C160 with C201. N-linked (GlcNAc...) asparagine glycans are attached at residues N257, N358, and N413.

This sequence belongs to the BPI/LBP/Plunc superfamily. BPI/LBP family. Probably primarily expressed in liver and adipose tissues. Detected in adrenal gland, mesenteric fat, spleen and aorta.

Its subcellular location is the secreted. The catalysed reaction is cholesteryl (9Z-octadecenoate)(in) = cholesteryl (9Z-octadecenoate)(out). The enzyme catalyses 1,2,3-tri-(9Z-octadecenoyl)-glycerol(in) = 1,2,3-tri-(9Z-octadecenoyl)-glycerol(out). It catalyses the reaction cholesteryl (9Z,12Z)-octadecadienoate(in) = cholesteryl (9Z,12Z)-octadecadienoate(out). Its function is as follows. Involved in the transfer of neutral lipids, including cholesteryl ester and triglyceride, among lipoprotein particles. Allows the net movement of cholesteryl ester from high density lipoproteins/HDL to triglyceride-rich very low density lipoproteins/VLDL, and the equimolar transport of triglyceride from VLDL to HDL. Regulates the reverse cholesterol transport, by which excess cholesterol is removed from peripheral tissues and returned to the liver for elimination. The polypeptide is Cholesteryl ester transfer protein (Macaca fascicularis (Crab-eating macaque)).